A 465-amino-acid chain; its full sequence is Soluble pyridine nucleotide transhydrogenase (465 aa).

36-45 contributes to the FAD binding site; it reads ERYNNVGGGC.

Belongs to the class-I pyridine nucleotide-disulfide oxidoreductase family. FAD is required as a cofactor.

Its subcellular location is the cytoplasm. The enzyme catalyses NAD(+) + NADPH = NADH + NADP(+). Conversion of NADPH, generated by peripheral catabolic pathways, to NADH, which can enter the respiratory chain for energy generation. This chain is Soluble pyridine nucleotide transhydrogenase, found in Serratia proteamaculans (strain 568).